The primary structure comprises 752 residues: DNA ligase (752 aa).

NAD(+) contacts are provided by residues 48–52 (DADYD), 97–98 (SL), and E131. K133 serves as the catalytic N6-AMP-lysine intermediate. NAD(+) is bound by residues R154, E189, K305, and K329. The Zn(2+) site is built by C434, C437, C452, and C458. A compositionally biased stretch (basic and acidic residues) spans 599–615 (ADEGRRASLQPQRDKAW). The tract at residues 599-618 (ADEGRRASLQPQRDKAWADT) is disordered. Positions 673-752 (ATQSAVAGLT…EQWLDRIGDA (80 aa)) constitute a BRCT domain.

The protein belongs to the NAD-dependent DNA ligase family. LigA subfamily. Mg(2+) is required as a cofactor. Mn(2+) serves as cofactor.

The catalysed reaction is NAD(+) + (deoxyribonucleotide)n-3'-hydroxyl + 5'-phospho-(deoxyribonucleotide)m = (deoxyribonucleotide)n+m + AMP + beta-nicotinamide D-nucleotide.. Its function is as follows. DNA ligase that catalyzes the formation of phosphodiester linkages between 5'-phosphoryl and 3'-hydroxyl groups in double-stranded DNA using NAD as a coenzyme and as the energy source for the reaction. It is essential for DNA replication and repair of damaged DNA. This chain is DNA ligase, found in Jannaschia sp. (strain CCS1).